Reading from the N-terminus, the 1019-residue chain is Probable inorganic carbon transporter subunit DabA 1 (1019 aa).

Zn(2+) contacts are provided by cysteine 491 and aspartate 493. The disordered stretch occupies residues 624–643 (VPTRLHSPRDEGSAAGGEGQ). Zn(2+) is bound by residues histidine 676 and cysteine 691.

It belongs to the inorganic carbon transporter (TC 9.A.2) DabA family. As to quaternary structure, forms a complex with DabB. It depends on Zn(2+) as a cofactor.

The protein resides in the cell inner membrane. Its function is as follows. Part of an energy-coupled inorganic carbon pump. In Sorangium cellulosum (strain So ce56) (Polyangium cellulosum (strain So ce56)), this protein is Probable inorganic carbon transporter subunit DabA 1.